A 322-amino-acid chain; its full sequence is Pilin gene-inverting protein (322 aa).

May be the site-specific invertase required for pilin gene inversion. Moraxella can express either a Q or I pilin; the inversion of 2 kb of DNA determines which pilin is expressed. In Moraxella bovis, this protein is Pilin gene-inverting protein (piv).